The sequence spans 401 residues: Imidazolonepropionase (401 aa).

Residues H66 and H68 each coordinate Fe(3+). Zn(2+)-binding residues include H66 and H68. 4-imidazolone-5-propanoate contacts are provided by R75, Y138, and H171. Y138 is an N-formimidoyl-L-glutamate binding site. H236 serves as a coordination point for Fe(3+). H236 provides a ligand contact to Zn(2+). Q239 contributes to the 4-imidazolone-5-propanoate binding site. Residue D311 participates in Fe(3+) binding. Zn(2+) is bound at residue D311. The N-formimidoyl-L-glutamate site is built by N313 and G315. T316 is a 4-imidazolone-5-propanoate binding site.

It belongs to the metallo-dependent hydrolases superfamily. HutI family. It depends on Zn(2+) as a cofactor. Requires Fe(3+) as cofactor.

The protein resides in the cytoplasm. It carries out the reaction 4-imidazolone-5-propanoate + H2O = N-formimidoyl-L-glutamate. The protein operates within amino-acid degradation; L-histidine degradation into L-glutamate; N-formimidoyl-L-glutamate from L-histidine: step 3/3. Catalyzes the hydrolytic cleavage of the carbon-nitrogen bond in imidazolone-5-propanoate to yield N-formimidoyl-L-glutamate. It is the third step in the universal histidine degradation pathway. In Pseudomonas fluorescens (strain Pf0-1), this protein is Imidazolonepropionase.